An 89-amino-acid chain; its full sequence is Inner kinetochore subunit mhf2 (89 aa).

Belongs to the CENP-X/MHF2 family. As to quaternary structure, the MHF histone-fold complex is a heterotetramer of 2 mhf1-mhf2 heterodimers. Component of the inner kinetochore constitutive centromere-associated network (CCAN) (also known as central kinetochore Sim4 complex in fission yeast), which is composed of at least cnl2, cnp3, cnp20, fta1, fta2, fta3, fta4, fta6, fta7, mal2, mhf1, mhf2, mis6, mis15, mis17, sim4 and wip1.

The protein localises to the nucleus. The protein resides in the cytoplasm. Its function is as follows. Component of a FANCM-MHF complex that promotes gene conversion at blocked replication forks, probably by reversal of the stalled fork. FANCM-MHF promotes non-crossover recombination. This Schizosaccharomyces pombe (strain 972 / ATCC 24843) (Fission yeast) protein is Inner kinetochore subunit mhf2.